The sequence spans 250 residues: Probable phosphatase VIBHAR_04983 (250 aa).

Residues His-8, His-10, His-16, His-41, Glu-74, His-102, His-132, Asp-194, and His-196 each contribute to the Zn(2+) site.

The protein belongs to the PHP family. Requires Zn(2+) as cofactor.

This is Probable phosphatase VIBHAR_04983 from Vibrio campbellii (strain ATCC BAA-1116).